A 168-amino-acid polypeptide reads, in one-letter code: GTP-dependent dephospho-CoA kinase (168 aa).

The GTP site is built by Asp49, Ile50, Val51, Asp68, Lys70, and Glu120.

The protein belongs to the GTP-dependent DPCK family.

It catalyses the reaction 3'-dephospho-CoA + GTP = GDP + CoA + H(+). Its pathway is cofactor biosynthesis; coenzyme A biosynthesis. Catalyzes the GTP-dependent phosphorylation of the 3'-hydroxyl group of dephosphocoenzyme A to form coenzyme A (CoA). The chain is GTP-dependent dephospho-CoA kinase from Pyrobaculum islandicum (strain DSM 4184 / JCM 9189 / GEO3).